Consider the following 204-residue polypeptide: Guanylate kinase (204 aa).

The Guanylate kinase-like domain occupies 6 to 184 (GLLIVLSGPA…AVDRIKAIVT (179 aa)). Position 13 to 20 (13 to 20 (GPAGVGKG)) interacts with ATP.

This sequence belongs to the guanylate kinase family.

The protein resides in the cytoplasm. It catalyses the reaction GMP + ATP = GDP + ADP. Essential for recycling GMP and indirectly, cGMP. In Halalkalibacterium halodurans (strain ATCC BAA-125 / DSM 18197 / FERM 7344 / JCM 9153 / C-125) (Bacillus halodurans), this protein is Guanylate kinase (gmk).